Reading from the N-terminus, the 143-residue chain is Transcription antitermination protein NusB (143 aa).

Belongs to the NusB family.

Functionally, involved in transcription antitermination. Required for transcription of ribosomal RNA (rRNA) genes. Binds specifically to the boxA antiterminator sequence of the ribosomal RNA (rrn) operons. This chain is Transcription antitermination protein NusB, found in Dehalococcoides mccartyi (strain ATCC BAA-2266 / KCTC 15142 / 195) (Dehalococcoides ethenogenes (strain 195)).